A 321-amino-acid polypeptide reads, in one-letter code: MASSSFTSLSVMVLLCLAAAAVASAQLSPTFYSRSCPRALATIKAAVTAAVAQEARMGASLLRLHFHDCFVQGCDGSVLLNDTATFTGEQTANPNVGSIRGFGVVDNIKAQVEAVCPGVVSCADILAVAARDSVVALGGPSWRVLLGRRDSTTASLALANSDLPAPSLDLANLTAAFAKKRLSRTDLVALSGAHTIGLAQCKNFRAHIYNDTNVNAAFATLRRANCPAAAGNGDGNLAPLDTATPTAFDNAYYTNLLAQRGLLHSDQQLFNGGATDGLVRTYASTPRRFSRDFAAAMIRMGNISPLTGTQGQIRRACSRVN.

Positions 1 to 25 (MASSSFTSLSVMVLLCLAAAAVASA) are cleaved as a signal peptide. A Pyrrolidone carboxylic acid modification is found at Gln26. Cystine bridges form between Cys36/Cys116, Cys69/Cys74, Cys122/Cys317, and Cys201/Cys226. The active-site Proton acceptor is the His67. Residues Asp68, Val71, Gly73, Asp75, and Ser77 each contribute to the Ca(2+) site. Residue Asn81 is glycosylated (N-linked (GlcNAc...) asparagine). A substrate-binding site is contributed by Pro164. An N-linked (GlcNAc...) asparagine glycan is attached at Asn172. His194 contacts heme b. Thr195 contacts Ca(2+). N-linked (GlcNAc...) asparagine glycosylation is present at Asn210. 3 residues coordinate Ca(2+): Asp241, Thr244, and Asp249.

Belongs to the peroxidase family. Classical plant (class III) peroxidase subfamily. Heme b is required as a cofactor. The cofactor is Ca(2+).

It is found in the secreted. It catalyses the reaction 2 a phenolic donor + H2O2 = 2 a phenolic radical donor + 2 H2O. Removal of H(2)O(2), oxidation of toxic reductants, biosynthesis and degradation of lignin, suberization, auxin catabolism, response to environmental stresses such as wounding, pathogen attack and oxidative stress. These functions might be dependent on each isozyme/isoform in each plant tissue. This Zea mays (Maize) protein is Peroxidase 70 (PER70).